A 363-amino-acid polypeptide reads, in one-letter code: Galactokinase (363 aa).

Position 16 to 19 (16 to 19 (EHTD)) interacts with substrate. Residues Ser50 and 103-109 (GSGLSSS) contribute to the ATP site. Positions 109 and 141 each coordinate Mg(2+). The Proton acceptor role is filled by Asp153. Residue Tyr205 coordinates substrate.

It belongs to the GHMP kinase family. GalK subfamily.

The protein resides in the cytoplasm. It carries out the reaction alpha-D-galactose + ATP = alpha-D-galactose 1-phosphate + ADP + H(+). It functions in the pathway carbohydrate metabolism; galactose metabolism. Its function is as follows. Catalyzes the transfer of the gamma-phosphate of ATP to D-galactose to form alpha-D-galactose-1-phosphate (Gal-1-P). The polypeptide is Galactokinase (Mycobacterium bovis (strain ATCC BAA-935 / AF2122/97)).